Consider the following 355-residue polypeptide: Sesquiterpene synthase MAJ_08936 (355 aa).

Mg(2+) is bound by residues aspartate 91 and aspartate 96. Positions 91–96 (DDLFVD) match the DDXXXD motif motif. Arginine 184 provides a ligand contact to substrate. Mg(2+) contacts are provided by asparagine 230, serine 234, and glutamate 238.

The protein belongs to the terpene synthase family. Mg(2+) serves as cofactor.

The enzyme catalyses (2E,6E)-farnesyl diphosphate + H2O = (+)-corvol ether B + diphosphate. It catalyses the reaction (2E,6E)-farnesyl diphosphate + H2O = (+)-corvol ether A + diphosphate. Its function is as follows. Terpene synthase that catalyzes the conversion of (2E,6E)-farnesyl diphosphate (FPP) into sesquiterpenes which are important for fungi-environment interactions. Produces a mixture consisting of 8 sesquiterpenes including corvol ethers A and B, as well as traces of epizonarene, gamma-cadinene, delta-cadinene, alpha-cadinene, alpha-cadinol, and an unidentified sesquiterpene. The major product is corvol ether A. The sequence is that of Sesquiterpene synthase MAJ_08936 from Metarhizium majus (strain ARSEF 297).